The following is a 1006-amino-acid chain: Probable beta-galactosidase A (1006 aa).

Residues 1–18 (MKLLSVCAVALLAAQAAG) form the signal peptide. Positions 96, 140, 141, and 142 each coordinate substrate. N-linked (GlcNAc...) asparagine glycosylation is present at N156. N199 serves as a coordination point for substrate. Catalysis depends on E200, which acts as the Proton donor. C205 and C206 are disulfide-bonded. N-linked (GlcNAc...) asparagine glycosylation is present at N207. Y260 contacts substrate. A disulfide bridge links C266 with C315. E298 (nucleophile) is an active-site residue. Position 364 (Y364) interacts with substrate. N373, N402, N422, N622, N777, and N914 each carry an N-linked (GlcNAc...) asparagine glycan.

This sequence belongs to the glycosyl hydrolase 35 family.

Its subcellular location is the secreted. It carries out the reaction Hydrolysis of terminal non-reducing beta-D-galactose residues in beta-D-galactosides.. In terms of biological role, cleaves beta-linked terminal galactosyl residues from gangliosides, glycoproteins, and glycosaminoglycans. The chain is Probable beta-galactosidase A (lacA) from Neosartorya fischeri (strain ATCC 1020 / DSM 3700 / CBS 544.65 / FGSC A1164 / JCM 1740 / NRRL 181 / WB 181) (Aspergillus fischerianus).